The chain runs to 406 residues: B3 domain-containing protein Os11g0197600 (406 aa).

A disordered region spans residues 1 to 20 (MVVREKQGGRMGKGKGKGKE). The TF-B3 1 DNA-binding region spans 30-123 (RSFFRVLLTL…QFSVTVFEPS (94 aa)). The tract at residues 199–245 (ESSRRKRAGASAGKSKVTSTSHNSTRGSSCSSDEDNSSSKSPNPPFL) is disordered. Residues 214 to 225 (KVTSTSHNSTRG) are compositionally biased toward polar residues. The TF-B3 2 DNA-binding region spans 298 to 393 (AVQIMMESYV…NIKVHIYRVV (96 aa)).

The protein localises to the nucleus. This Oryza sativa subsp. japonica (Rice) protein is B3 domain-containing protein Os11g0197600.